Reading from the N-terminus, the 4561-residue chain is StAR-related lipid transfer protein 9 (4561 aa).

Positions 3–384 (NVQVAVRVRP…MRYASNAKNI (382 aa)) constitute a Kinesin motor domain. 103–110 (GQTGSGKT) contacts ATP. Residues 307–321 (SSGGDSGVPSTTSGA) are compositionally biased toward low complexity. The interval 307-330 (SSGGDSGVPSTTSGASSGGGPARR) is disordered. An FHA domain is found at 482–533 (TKIGRIDSDQEQDIVLQGQWIERDHCTITSTCGVVILRPTQGARCTVNGREV). 3 disordered regions span residues 784 to 805 (SRAPSWASSSNTSGPGSQRRSR), 873 to 1064 (SRWR…DTES), and 1092 to 1153 (WNLP…PSDS). 4 stretches are compositionally biased toward polar residues: residues 789–805 (WASSSNTSGPGSQRRSR), 884–903 (ASTQGTHLTVSHKSVSSQEI), 911–920 (CQMSSQGQST), and 939–948 (RWASVNTKTG). Composition is skewed to basic and acidic residues over residues 1046-1060 (RPIKDPVREEDRDLS) and 1124-1135 (SRGEYSMKDHGH). S1164 carries the post-translational modification Phosphoserine. Disordered regions lie at residues 1288 to 1392 (PSGD…SDMS), 1700 to 1767 (REAW…EEEN), 1959 to 1980 (ECKAHGQSQEVQSKEEPLEEKQ), 2077 to 2120 (TNAT…ADRL), 2320 to 2356 (LATGVGDQDHSGETRSSSPQERASGDVSTTHTPLGGS), 2384 to 2427 (VSTS…SSLD), 2439 to 2467 (FLLQEDSNQGEEERQKAEETSEDQQLPNS), 2622 to 2656 (KPRQFCGASGRSDSSEVIEKRKEASRTKSSVDPLP), 2712 to 2735 (KDSILGHQEPRSLDSTHGGGSEKI), 2777 to 2800 (TGLEETKASPKSGAVHPEAPGNVG), 3002 to 3067 (RSVE…PGTL), 3185 to 3207 (AQTEPSQPAAQTHSQHCSDREQL), 3246 to 3286 (ELNL…TSLK), 3645 to 3703 (EGAA…LRPE), 3790 to 3847 (SDLA…PQQS), and 3863 to 3913 (QPKT…GRTT). Residues 1300–1321 (DIHEIQPHDEKPKHWLSIEEPK) show a composition bias toward basic and acidic residues. Polar residues-rich tracts occupy residues 1328–1360 (LPQSSTEPPCSSDLYATSASDTSKPSVCESQGL) and 1722–1741 (PKLSQSQNSKIDSPQQTTTK). 2 stretches are compositionally biased toward basic and acidic residues: residues 1754–1767 (ELGKHSRNMREEEN) and 1970–1980 (QSKEEPLEEKQ). The segment covering 2077–2091 (TNATSNNNTQIQKLT) has biased composition (polar residues). Basic and acidic residues predominate over residues 2096–2110 (RSREYVQTRESESEH). Polar residues-rich tracts occupy residues 2333 to 2351 (TRSSSPQERASGDVSTTHT) and 2399 to 2408 (TSTGSTTQEA). Residues 2414–2463 (EATVQKERKNSSLDRISRQAEKRVSFLLQEDSNQGEEERQKAEETSEDQQ) adopt a coiled-coil conformation. Residues 2417 to 2427 (VQKERKNSSLD) are compositionally biased toward basic and acidic residues. Residues 2634–2647 (DSSEVIEKRKEASR) are compositionally biased toward basic and acidic residues. 2 stretches are compositionally biased toward polar residues: residues 3039 to 3054 (LKNNSVDENGQASQTM) and 3187 to 3199 (TEPSQPAAQTHSQ). A compositionally biased stretch (pro residues) spans 3689–3700 (PASPDGSPPPSL). The segment covering 3812–3835 (DSQRAESLDREGKSPLGKSSERLL) has biased composition (basic and acidic residues). The span at 3863–3874 (QPKTTTGDQSKL) shows a compositional bias: polar residues. Positions 4185-4224 (SDIELMLQEYRRAREEAKVEIAQARDRLKERTEQEKMRIR) form a coiled coil. The region spanning 4344-4561 (PYQDLAKHIV…VAKLASFLRS (218 aa)) is the START domain.

It belongs to the TRAFAC class myosin-kinesin ATPase superfamily. Kinesin family. Interacts with ATAD3A.

It is found in the cytoplasm. The protein resides in the cytoskeleton. Its subcellular location is the microtubule organizing center. The protein localises to the centrosome. It localises to the centriole. It is found in the nucleus. In terms of biological role, microtubule-dependent motor protein required for spindle pole assembly during mitosis. Required to stabilize the pericentriolar material (PCM). In Mus musculus (Mouse), this protein is StAR-related lipid transfer protein 9 (Stard9).